The chain runs to 915 residues: Protein translocase subunit SecA (915 aa).

Residues glutamine 87, 105–109, and aspartate 516 contribute to the ATP site; that span reads GEGKT. Residues 866-915 form a disordered region; it reads MTYGAPSDGDIGGSVEDEPLELPEGARVGRNDPCPCGSGKKYKQCHGKLS. Zn(2+) is bound by residues cysteine 899, cysteine 901, cysteine 910, and histidine 911. A compositionally biased stretch (basic residues) spans 905-915; it reads KKYKQCHGKLS.

This sequence belongs to the SecA family. Monomer and homodimer. Part of the essential Sec protein translocation apparatus which comprises SecA, SecYEG and auxiliary proteins SecDF-YajC and YidC. Zn(2+) is required as a cofactor.

The protein localises to the cell inner membrane. The protein resides in the cytoplasm. It catalyses the reaction ATP + H2O + cellular proteinSide 1 = ADP + phosphate + cellular proteinSide 2.. Its function is as follows. Part of the Sec protein translocase complex. Interacts with the SecYEG preprotein conducting channel. Has a central role in coupling the hydrolysis of ATP to the transfer of proteins into and across the cell membrane, serving both as a receptor for the preprotein-SecB complex and as an ATP-driven molecular motor driving the stepwise translocation of polypeptide chains across the membrane. The chain is Protein translocase subunit SecA from Delftia acidovorans (strain DSM 14801 / SPH-1).